We begin with the raw amino-acid sequence, 284 residues long: 2,3,4,5-tetrahydropyridine-2,6-dicarboxylate N-succinyltransferase (284 aa).

2 residues coordinate substrate: Arg-111 and Asp-148.

It belongs to the transferase hexapeptide repeat family. In terms of assembly, homotrimer.

The protein resides in the cytoplasm. It carries out the reaction (S)-2,3,4,5-tetrahydrodipicolinate + succinyl-CoA + H2O = (S)-2-succinylamino-6-oxoheptanedioate + CoA. Its pathway is amino-acid biosynthesis; L-lysine biosynthesis via DAP pathway; LL-2,6-diaminopimelate from (S)-tetrahydrodipicolinate (succinylase route): step 1/3. This chain is 2,3,4,5-tetrahydropyridine-2,6-dicarboxylate N-succinyltransferase, found in Chelativorans sp. (strain BNC1).